Reading from the N-terminus, the 604-residue chain is Vacuolar protein sorting-associated protein 64 (604 aa).

A disordered region spans residues 1–89 (MVELEKRRRP…SVHQVSQQQQ (89 aa)). The Cytoplasmic segment spans residues 1-578 (MVELEKRRRP…LGVVEGKRTR (578 aa)). The span at 22 to 34 (DQSNSQGMTKTPE) shows a compositional bias: polar residues. Composition is skewed to low complexity over residues 44–57 (RARS…SRSN) and 77–89 (SPPS…QQQQ). The FHA domain maps to 185–257 (LKLGRPVTNS…NGTFVNGVKI (73 aa)). A coiled-coil region spans residues 404–563 (NLINMIKTLT…EEKKDTEDTL (160 aa)). The segment at 539 to 561 (INNDNNAKVKQNDSREEKKDTED) is disordered. The span at 548–560 (KQNDSREEKKDTE) shows a compositional bias: basic and acidic residues. A helical; Anchor for type IV membrane protein transmembrane segment spans residues 579-598 (VSKGMLFGVVAISFGLVATA). At 599–604 (VKQLPQ) the chain is on the lumenal side.

Component of a complex at least composed of FAR3, FAR7, FAR8, FAR10, FAR11 and VPS64.

The protein localises to the endoplasmic reticulum membrane. Its function is as follows. Participates in the control of the reentry into the cell cycle following pheromone treatment. Involved in vacuolar protein sorting. This Saccharomyces cerevisiae (strain ATCC 204508 / S288c) (Baker's yeast) protein is Vacuolar protein sorting-associated protein 64 (VPS64).